We begin with the raw amino-acid sequence, 338 residues long: UPF0194 membrane protein in asrC 5'region (338 aa).

An N-terminal signal peptide occupies residues 1–23 (MAISPKKRALALVVVLIVAGAVA). Positions 148 to 207 (KQSLDNAAAALKTARANLDRAQQALTLAIKGPRKEDIAAARQQLQADKAGLSLARRELTD) form a coiled coil.

The protein belongs to the UPF0194 family.

The protein localises to the periplasm. The sequence is that of UPF0194 membrane protein in asrC 5'region from Acidithiobacillus ferridurans.